The following is a 258-amino-acid chain: uncharacterized protein (258 aa).

Residues isoleucine 17, aspartate 53, asparagine 80, arginine 113, tyrosine 145, lysine 149, isoleucine 178, and serine 180 each contribute to the NADP(+) site. The active-site Proton donor is tyrosine 145. Lysine 149 serves as the catalytic Lowers pKa of active site Tyr.

The protein belongs to the short-chain dehydrogenases/reductases (SDR) family.

The protein resides in the cytoplasm. The protein localises to the nucleus. This is an uncharacterized protein from Schizosaccharomyces pombe (strain 972 / ATCC 24843) (Fission yeast).